The primary structure comprises 360 residues: Phospho-N-acetylmuramoyl-pentapeptide-transferase (360 aa).

Transmembrane regions (helical) follow at residues 18–38 (VFSY…FISL), 73–93 (TMGG…WADL), 94–114 (SNIY…VGFV), 134–154 (YFWQ…IAQG), 168–188 (LLPQ…VGTS), 199–219 (GLAI…AYVT), 239–259 (LVIV…FNTY), 263–283 (VFMG…IAIL), 288–308 (LVLF…ILQV), and 338–358 (VIVR…ATLK).

Belongs to the glycosyltransferase 4 family. MraY subfamily. Requires Mg(2+) as cofactor.

The protein localises to the cell inner membrane. It carries out the reaction UDP-N-acetyl-alpha-D-muramoyl-L-alanyl-gamma-D-glutamyl-meso-2,6-diaminopimeloyl-D-alanyl-D-alanine + di-trans,octa-cis-undecaprenyl phosphate = di-trans,octa-cis-undecaprenyl diphospho-N-acetyl-alpha-D-muramoyl-L-alanyl-D-glutamyl-meso-2,6-diaminopimeloyl-D-alanyl-D-alanine + UMP. Its pathway is cell wall biogenesis; peptidoglycan biosynthesis. Its function is as follows. Catalyzes the initial step of the lipid cycle reactions in the biosynthesis of the cell wall peptidoglycan: transfers peptidoglycan precursor phospho-MurNAc-pentapeptide from UDP-MurNAc-pentapeptide onto the lipid carrier undecaprenyl phosphate, yielding undecaprenyl-pyrophosphoryl-MurNAc-pentapeptide, known as lipid I. This Colwellia psychrerythraea (strain 34H / ATCC BAA-681) (Vibrio psychroerythus) protein is Phospho-N-acetylmuramoyl-pentapeptide-transferase.